The sequence spans 662 residues: A-kinase anchor protein 10, mitochondrial (662 aa).

The transit peptide at 1–28 directs the protein to the mitochondrion; the sequence is MRGAGPSPRQSPRTLRPDPGPAMSFFRR. The segment at 1–55 is disordered; it reads MRGAGPSPRQSPRTLRPDPGPAMSFFRRKVKGKEQEKTSDVKSIKASISVHSPQK. Over residues 32 to 43 the composition is skewed to basic and acidic residues; sequence GKEQEKTSDVKS. Phosphoserine is present on residues S52 and S189. 2 consecutive RGS domains span residues 125–369 and 379–505; these read TLEQ…CKYQ and YLAD…YKYL. Residues 261-280 show a composition bias toward polar residues; it reads SMETQESSSTLTVASRNSPA. A disordered region spans residues 261–282; that stretch reads SMETQESSSTLTVASRNSPASP. At S281 the chain carries Phosphoserine. A disordered region spans residues 524–548; that stretch reads LTAPGSVGPPDESHPGSSDSSASQS. The interval 634–647 is PKA-RII subunit binding; that stretch reads LAWKIAKMIVSDIM.

It localises to the mitochondrion. The protein resides in the membrane. Its subcellular location is the cytoplasm. In terms of biological role, differentially targeted protein that binds to type I and II regulatory subunits of protein kinase A and anchors them to the mitochondria or the plasma membrane. Although the physiological relevance between PKA and AKAPS with mitochondria is not fully understood, one idea is that BAD, a proapoptotic member, is phosphorylated and inactivated by mitochondria-anchored PKA. It cannot be excluded too that it may facilitate PKA as well as G protein signal transduction, by acting as an adapter for assembling multiprotein complexes. With its RGS domain, it could lead to the interaction to G-alpha proteins, providing a link between the signaling machinery and the downstream kinase. The polypeptide is A-kinase anchor protein 10, mitochondrial (AKAP10) (Homo sapiens (Human)).